The following is a 518-amino-acid chain: Calcium-dependent protein kinase 1 (518 aa).

Positions 1–10 (MGNRTSRHHR) are enriched in basic residues. Residues 1-49 (MGNRTSRHHRAAPEQPPPQPKPKPQPQQQQQQWPRPQQPTPPPAAAPDA) form a disordered region. The N-myristoyl glycine moiety is linked to residue Gly2. The segment covering 14-25 (EQPPPQPKPKPQ) has biased composition (pro residues). The segment covering 26-35 (PQQQQQQWPR) has biased composition (low complexity). Residues 36–45 (PQQPTPPPAA) are compositionally biased toward pro residues. The 259-residue stretch at 66–324 (YTFGRELGRG…SAEILNHPWI (259 aa)) folds into the Protein kinase domain. Residues 72 to 80 (LGRGQFGVT) and Lys95 contribute to the ATP site. The active-site Proton acceptor is Asp190. Residues 330-360 (APDKPLDITVISRMKQFRAMNKLKKVALKVV) form an autoinhibitory domain region. EF-hand domains are found at residues 367–402 (EEIT…LGTK), 403–438 (ISES…MNRL), 439–474 (EKED…YDMG), and 475–509 (DDKT…NNPE). Ca(2+) is bound by residues Asp380, Asp382, Ser384, Thr386, Glu391, Asp416, Asp418, Asn420, Thr422, Glu427, Asp452, Asp454, Ser456, Tyr458, Glu463, Asp487, Asp489, Asp491, Arg493, and Glu498.

Belongs to the protein kinase superfamily. Ser/Thr protein kinase family. CDPK subfamily. As to expression, expressed in roots and leaf blades.

It localises to the membrane. It carries out the reaction L-seryl-[protein] + ATP = O-phospho-L-seryl-[protein] + ADP + H(+). The catalysed reaction is L-threonyl-[protein] + ATP = O-phospho-L-threonyl-[protein] + ADP + H(+). With respect to regulation, activated by calcium. Autophosphorylation may play an important role in the regulation of the kinase activity. Functionally, may play a role in signal transduction pathways that involve calcium as a second messenger. This chain is Calcium-dependent protein kinase 1, found in Oryza sativa subsp. japonica (Rice).